Reading from the N-terminus, the 240-residue chain is Protein shisa-5 (240 aa).

The first 28 residues, 1–28 (MTAPVPAPRILLPLLLLLLLTPPPGARG), serve as a signal peptide directing secretion. At 29–105 (EVCMASRGLS…RPGYNDPMSG (77 aa)) the chain is on the extracellular side. The helical transmembrane segment at 106 to 126 (FGATLAVGLTIFVLSVVTIII) threads the bilayer. Residues 127-240 (CFTCSCCCLY…AYMDAPKAAL (114 aa)) lie on the Cytoplasmic side of the membrane.

It belongs to the shisa family. In terms of assembly, interacts with PDCD6; PDCD6 can stabilize SHISA5.

The protein resides in the endoplasmic reticulum membrane. It localises to the nucleus membrane. Can induce apoptosis in a caspase-dependent manner and plays a role in p53/TP53-dependent apoptosis. This chain is Protein shisa-5 (SHISA5), found in Homo sapiens (Human).